The primary structure comprises 249 residues: Adenylate kinase (249 aa).

Position 43 to 48 (43 to 48 (GAGKGT)) interacts with ATP. An NMP region spans residues 63-92 (ATGDMLRAQVAAKTALGVEAKKIMDQGGLV). AMP is bound by residues T64, R69, 90 to 92 (GLV), 119 to 122 (GFPR), and Q126. Residues 160–197 (GRLVHPASGRSYHKLFNPPKKDMTDDVTGEPLVQRSDD) are LID. Residues R161 and 170-171 (SY) contribute to the ATP site. Residues 177–197 (PPKKDMTDDVTGEPLVQRSDD) are disordered. Residues R194 and R205 each coordinate AMP. Q233 contacts ATP.

This sequence belongs to the adenylate kinase family. AK2 subfamily. In terms of assembly, monomer.

The protein resides in the cytoplasm. It localises to the cytosol. Its subcellular location is the mitochondrion intermembrane space. The catalysed reaction is AMP + ATP = 2 ADP. Its function is as follows. Catalyzes the reversible transfer of the terminal phosphate group between ATP and AMP. Plays an important role in cellular energy homeostasis and in adenine nucleotide metabolism. Adenylate kinase activity is critical for regulation of the phosphate utilization and the AMP de novo biosynthesis pathways. The polypeptide is Adenylate kinase (Candida albicans (strain SC5314 / ATCC MYA-2876) (Yeast)).